We begin with the raw amino-acid sequence, 61 residues long: Small ribosomal subunit protein uS14 (61 aa).

4 residues coordinate Zn(2+): Cys24, Cys27, Cys40, and Cys43.

The protein belongs to the universal ribosomal protein uS14 family. Zinc-binding uS14 subfamily. In terms of assembly, part of the 30S ribosomal subunit. Contacts proteins S3 and S10. The cofactor is Zn(2+).

In terms of biological role, binds 16S rRNA, required for the assembly of 30S particles and may also be responsible for determining the conformation of the 16S rRNA at the A site. This chain is Small ribosomal subunit protein uS14, found in Thermosipho africanus (strain TCF52B).